The sequence spans 369 residues: Methionine aminopeptidase 1B, chloroplastic (369 aa).

The transit peptide at 1 to 61 (MASSVFLSSF…YSPRQFHVSA (61 aa)) directs the protein to the chloroplast. A substrate-binding site is contributed by H199. 3 residues coordinate a divalent metal cation: D216, D227, and H290. H297 is a substrate binding site. Positions 322 and 353 each coordinate a divalent metal cation.

This sequence belongs to the peptidase M24A family. Methionine aminopeptidase type 1 subfamily. Requires Co(2+) as cofactor. Zn(2+) serves as cofactor. It depends on Mn(2+) as a cofactor. The cofactor is Fe(2+). Ubiquitous. Preferentially expressed in green tissues.

Its subcellular location is the plastid. The protein resides in the chloroplast. It catalyses the reaction Release of N-terminal amino acids, preferentially methionine, from peptides and arylamides.. In terms of biological role, removes the N-terminal methionine from nascent proteins. The N-terminal methionine is often cleaved when the second residue in the primary sequence is small and uncharged (Met-Ala-, Cys, Gly, Pro, Ser, Thr, or Val). This is Methionine aminopeptidase 1B, chloroplastic (MAP1B) from Arabidopsis thaliana (Mouse-ear cress).